A 238-amino-acid polypeptide reads, in one-letter code: RxLR effector protein PITG_14788 (238 aa).

The N-terminal stretch at 1 to 23 (MKSLHAVNLVLLLLLACFAPAPA) is a signal peptide. A RxLR-dEER motif is present at residues 47 to 65 (RLLRAHSSGKEEQKEEEER).

Belongs to the RxLR effector family.

The protein localises to the secreted. The protein resides in the host cytoplasm. It localises to the host cytoskeleton. Its subcellular location is the host nucleus. It is found in the host nucleolus. Effector that enhances P.infestans colonization of Nicotiana benthamiana leaves. The sequence is that of RxLR effector protein PITG_14788 from Phytophthora infestans (strain T30-4) (Potato late blight agent).